The chain runs to 119 residues: Large ribosomal subunit protein uL18 (119 aa).

Belongs to the universal ribosomal protein uL18 family. In terms of assembly, part of the 50S ribosomal subunit; part of the 5S rRNA/L5/L18/L25 subcomplex. Contacts the 5S and 23S rRNAs.

Its function is as follows. This is one of the proteins that bind and probably mediate the attachment of the 5S RNA into the large ribosomal subunit, where it forms part of the central protuberance. In Desulfovibrio desulfuricans (strain ATCC 27774 / DSM 6949 / MB), this protein is Large ribosomal subunit protein uL18.